A 1001-amino-acid chain; its full sequence is Sarcoplasmic/endoplasmic reticulum calcium ATPase 1 (1001 aa).

At 1-48 (MEAAHSKSTEECLAYFGVSETTGLTPDQVKRHLEKYGHNELPAEEGKS) the chain is on the cytoplasmic side. Residues 49–69 (LWELVIEQFEDLLVRILLLAA) form a helical membrane-spanning segment. The Lumenal segment spans residues 70-89 (CISFVLAWFEEGEETITAFV). The helical transmembrane segment at 90–110 (EPFVILLILIANAIVGVWQER) threads the bilayer. The Cytoplasmic portion of the chain corresponds to 111-253 (NAENAIEALK…QDKTPLQQKL (143 aa)). Residues 254-273 (DEFGEQLSKVISLICVAVWL) traverse the membrane as a helical segment. Residues 274–295 (INIGHFNDPVHGGSWIRGAIYY) are Lumenal-facing. The helical transmembrane segment at 296-313 (FKIAVALAVAAIPEGLPA) threads the bilayer. Positions 304, 305, 307, and 309 each coordinate Ca(2+). At 314-757 (VITTCLALGT…EEGRAIYNNM (444 aa)) the chain is on the cytoplasmic side. The active-site 4-aspartylphosphate intermediate is the aspartate 351. Mg(2+) is bound by residues aspartate 351 and threonine 353. ATP is bound at residue threonine 353. A Phosphothreonine modification is found at threonine 441. ATP is bound by residues glutamate 442, arginine 489, lysine 515, and arginine 560. The residue at position 569 (threonine 569) is a Phosphothreonine. The residue at position 581 (serine 581) is a Phosphoserine. 5 residues coordinate ATP: threonine 625, glycine 626, aspartate 627, arginine 678, and lysine 684. Aspartate 703 is a Mg(2+) binding site. An ATP-binding site is contributed by asparagine 706. A helical transmembrane segment spans residues 758–777 (KQFIRYLISSNVGEVVCIFL). Ca(2+)-binding residues include asparagine 768 and glutamate 771. Residues 778-787 (TAALGLPEAL) are Lumenal-facing. The helical transmembrane segment at 788-808 (IPVQLLWVNLVTDGLPATALG) threads the bilayer. Positions 788-808 (IPVQLLWVNLVTDGLPATALG) are interaction with PLN. Asparagine 796, threonine 799, and aspartate 800 together coordinate Ca(2+). Topologically, residues 809-828 (FNPPDLDIMDRPPRSPKEPL) are cytoplasmic. A helical membrane pass occupies residues 829–851 (ISGWLFFRYMAIGGYVGAATVGA). Topologically, residues 852–897 (AAWWFMYAEDGPGVTYHQLTHFMQCTEDHPHFEGLDCEIFEAPEPM) are lumenal. Cysteine 876 and cysteine 888 are oxidised to a cystine. The chain crosses the membrane as a helical span at residues 898-917 (TMALSVLVTIEMCNALNSLS). Glutamate 908 contacts Ca(2+). Topologically, residues 918–930 (ENQSLMRMPPWVN) are cytoplasmic. Residues 931 to 949 (IWLLGSICLSMSLHFLILY) form a helical membrane-spanning segment. Residues 932–943 (WLLGSICLSMSL) are interaction with PLN. The Lumenal portion of the chain corresponds to 950–964 (VDPLPMIFKLKALDL). A helical membrane pass occupies residues 965 to 985 (TQWLMVLKISLPVIGLDEILK). Residues 986–1001 (FIARNYLEDPEDERRK) are Cytoplasmic-facing.

This sequence belongs to the cation transport ATPase (P-type) (TC 3.A.3) family. Type IIA subfamily. As to quaternary structure, interacts with sarcolipin (SLN). Interacts with phospholamban (PLN). Interacts with myoregulin (MRLN). Interacts with DWORF. Interacts with VMP1. The cofactor is Mg(2+). In terms of tissue distribution, skeletal muscle (at protein level). Skeletal muscle, fast twitch muscle (type II) fibers.

It is found in the endoplasmic reticulum membrane. The protein localises to the sarcoplasmic reticulum membrane. The catalysed reaction is Ca(2+)(in) + ATP + H2O = Ca(2+)(out) + ADP + phosphate + H(+). With respect to regulation, inhibited by sarcolipin (SLN) and myoregulin (MRLN). Has also been shown to be reversibly inhibited by phospholamban (PLN) at low calcium concentrations in vitro. Dephosphorylated PLN decreases the apparent affinity of the ATPase for calcium and this inhibition is regulated by the phosphorylation of PLN in vitro. Enhanced by DWORF; DWORF increases activity by displacing sarcolipin (SLN), phospholamban (PLN) and myoregulin (MRLN). In terms of biological role, key regulator of striated muscle performance by acting as the major Ca(2+) ATPase responsible for the reuptake of cytosolic Ca(2+) into the sarcoplasmic reticulum. Catalyzes the hydrolysis of ATP coupled with the translocation of calcium from the cytosol to the sarcoplasmic reticulum lumen. Contributes to calcium sequestration involved in muscular excitation/contraction. The sequence is that of Sarcoplasmic/endoplasmic reticulum calcium ATPase 1 (ATP2A1) from Oryctolagus cuniculus (Rabbit).